We begin with the raw amino-acid sequence, 670 residues long: tRNA 5-methylaminomethyl-2-thiouridine biosynthesis bifunctional protein MnmC (670 aa).

The interval 1 to 245 (MKPIAIQPAS…KREMLTGALS (245 aa)) is tRNA (mnm(5)s(2)U34)-methyltransferase. Positions 271-670 (VGGGIASALL…RKLLKGRAAS (400 aa)) are FAD-dependent cmnm(5)s(2)U34 oxidoreductase.

It in the N-terminal section; belongs to the methyltransferase superfamily. tRNA (mnm(5)s(2)U34)-methyltransferase family. In the C-terminal section; belongs to the DAO family. FAD serves as cofactor.

The protein resides in the cytoplasm. It carries out the reaction 5-aminomethyl-2-thiouridine(34) in tRNA + S-adenosyl-L-methionine = 5-methylaminomethyl-2-thiouridine(34) in tRNA + S-adenosyl-L-homocysteine + H(+). Functionally, catalyzes the last two steps in the biosynthesis of 5-methylaminomethyl-2-thiouridine (mnm(5)s(2)U) at the wobble position (U34) in tRNA. Catalyzes the FAD-dependent demodification of cmnm(5)s(2)U34 to nm(5)s(2)U34, followed by the transfer of a methyl group from S-adenosyl-L-methionine to nm(5)s(2)U34, to form mnm(5)s(2)U34. The protein is tRNA 5-methylaminomethyl-2-thiouridine biosynthesis bifunctional protein MnmC of Cronobacter sakazakii (strain ATCC BAA-894) (Enterobacter sakazakii).